A 373-amino-acid polypeptide reads, in one-letter code: Acyl-CoA dehydrogenase FadE27 (373 aa).

Residues Arg-251, His-327, and Gly-331 each coordinate FAD.

It belongs to the acyl-CoA dehydrogenase family. In terms of assembly, heterotetramer (dimer of heterodimers) composed of FadE26 and FadE27. The cofactor is FAD.

It carries out the reaction (25S)-3-oxocholest-4-en-26-oyl-CoA + A = 3-oxo-cholest-4,24-dien-26-oyl-CoA + AH2. It functions in the pathway steroid metabolism; cholesterol degradation. Its activity is regulated as follows. Uncompetitively inhibited by high concentration of 3-OCS-CoA. Functionally, involved in the first cycle of side chain dehydrogenation in the beta-oxidation of cholesterol catabolism. It contributes partly to the virulence by increasing the efficiency of beta-oxidation. Catalyzes the dehydrogenation of acyl-CoA ester side chains of (25S)-3-oxo-cholest-4-en-26-oyl-CoA (3-OCS-CoA) to yield (24E)-3-oxo-cholest-4,24-dien-26-oyl-CoA. Also able to dehydrogenate steroyl-CoA such as 3-oxo-chol-4-en-24-oyl-CoA (3-OCO-CoA) as well as 3-oxo-4-pregnene-20-carboxyl-CoA (3-OPC-CoA). It dehydrogenates only (25S)-OCS-CoA diastereomer. This chain is Acyl-CoA dehydrogenase FadE27 (fadE27), found in Mycobacterium tuberculosis (strain ATCC 25618 / H37Rv).